The chain runs to 237 residues: MRLQRGFTLLELLIAIAIFALLALATYRMFDSVMQTDQATRVQEQRMRELVRAMGALERDLTQAVERPVRDELGDNRGAFLSEGENDQIVEFTRGGWRNPLGQARSRLQRVRWSLSGETLERRYWLVLDRAQDSKPRVQQVLDGVTALSWRFLDKEHNWQGHWPTDEGSEEERLESLPLAVEMTLEHRHYGKLVRVWRLLDPPLKQDQPQGQPGGENGENGEGGVPQPPEGMPGAPE.

Residues 1–6 (MRLQRG) constitute a propeptide, leader sequence. Phenylalanine 7 bears the N-methylphenylalanine mark. Residues 7–29 (FTLLELLIAIAIFALLALATYRM) form a helical membrane-spanning segment. The interval 203–237 (PLKQDQPQGQPGGENGENGEGGVPQPPEGMPGAPE) is disordered. Positions 212-224 (QPGGENGENGEGG) are enriched in gly residues. Over residues 226 to 237 (PQPPEGMPGAPE) the composition is skewed to pro residues.

This sequence belongs to the GSP J family. In terms of assembly, type II secretion is composed of four main components: the outer membrane complex, the inner membrane complex, the cytoplasmic secretion ATPase and the periplasm-spanning pseudopilus. Forms the tip of the type II pseudopilus by interacting with XcpV, XcpU and XcpX. Interacts with core component XcpT. In terms of processing, cleaved by prepilin peptidase. Methylated by prepilin peptidase at the amino group of the N-terminal phenylalanine once the leader sequence is cleaved by prepilin peptidase.

The protein resides in the cell inner membrane. Functionally, component of the type II secretion system required for the energy-dependent secretion of extracellular factors such as proteases and toxins from the periplasm. Part of the pseudopilus tip complex that is critical for the recognition and binding of secretion substrates. Type II pseudopilus confers increased bacterial adhesive capabilities. This chain is Type II secretion system protein J (xcpW), found in Pseudomonas aeruginosa (strain ATCC 15692 / DSM 22644 / CIP 104116 / JCM 14847 / LMG 12228 / 1C / PRS 101 / PAO1).